The chain runs to 1693 residues: MTVMLSCLTQQQELLQSLADRVGQPAIQDNLYFCLAGQFTWVEDWYTTAIAGDVLIFDAGEKEQLARVLQQWEQFTGHVILITGLTEEPDPQTFLTQLALGKQQRCGERHFHWIVLVDPTIEEAFRGLQTFLDGKSHWLDLRLGVGDLEQCTDELWQCVWLEPSPLAPEKRQEMLVNLPHWLAEIVDQKQNLELEPISLLQAKLSLLQGLARESRGEMGRKQAQCHYRESLDVWELLGDTEAIIWLSLRLGYLFLLQAYGEKSRGHQLWQQTRNYAQTAIAALENQQWHFTHGETLNLLGEILRGLEDWEQLRQAAENSLIFFYQLSPFAATDTTPERNQEKLWTELELQGLISLAHSYLCEALVEQWKFDEGKEALKRAFETRPKQVEERDYRPCLANLHYLAGRVQLANDQIRESLMTLRQAQTLVSFEDNPRLYLAILVELRECYLQLEDWLAALAIDQEYQAREYRLGQRAFIGPKPLPCWPEQRICRHPLAPEKMLGGGAEARSAVQSKTMVSLTWQDLQKVWEQKPTPVLVLTGEPGVGKTSWLAGEVLQQMSPERVLLVDFTPHWAEKLWVHLGESFSLPSLGQATTPELVSALQALPILDLLLVLDGENGSLPWQKSPSLRQQELAQVLWQWLLTTSPSQGVRLLISVPPTAIADLYEELKGQLGEEHSLPPLQYQTLSPPTLGQAENWLTQAMAQCRHPWPPSLQSQFLGDLAMEGNGEQQPWLHPIDLQLLGTVLEQEQVTKSADYQGKKLDEWLTLAVQTYLAFLPPHLLKKALQLLKSLADGQQALCLKTEYQLLAALYSAPEPAADNPPEFAQEDIQQLQLLLTLLLRGRLIIVISQATLPYYRLSTTHLAHALQGKSAVISTPALINAGRRGSKSNPNLIAPSPGDRQQGNEDLIAELEAGSSAEEQVVAQKLKAAQLQYQKLVAGINLEKQCQFILKQFLVYPLEALLAAVKTGQDLQKLVTPETPLVQYPSLAPWLSLHSILARINECNRCHHEGPVTVLRISPSMENTPPLVLTATTNGIAYLWSFHGELINVLRGHQEAITALDWSADGQYFATASADHTVKLWQRHGEEVATLRGHEDWVRSVHFSPHHQFLVTSGQDNTARIWNFAGEQLTLCQGHADWVRNAEFNCHGQILLTASRDGTARLWDLEGREIGLCQGHTSWVRNAQFSPDGQWIVTCSADGTARLWDLSSQCFAVLKGHQNWVNNALWSPDGQHIITSSSDGTARVWSRHGKCLGTLRGHDHNIHGARFSLDGQKIVTYSTDNTARLWTKEGTLLTILRGHQKEVYDADFSADGRFVFTVSADQTARQWDISQKDTITLTGHSHWVRNAHFNPKGDRLLTVSRDKTARLWTTEGECVAVLADHQGWVREGQFSPDGQWIVTGSADKTAQLWNVLGKKLTVLRGHQDAVLNVRFSPDSQYIVTASKDGTARVWNNTGRELAVLRHYEKNIFAAEFSADGQFIVTASDDNTAGIWEIVGREVGICRGHEGPVYFAQFSADSRYILTASVDNTARIWDFLGRPLLTLAGHQSIVYQARFSPEGNLIATVSADHTARLWDRSGKTVAVLYGHQGLVGTVDWSPDGQMLVTASNDGTARLWDLSGRELLTLEGHGNWVRSAEFSPDGRWVLTSSADGTAKLWPVKTLPQLLSQGGQWLKNYLTHNALVSPADRPGAKVT.

WD repeat units follow at residues 1008-1042 (HHEG…YLWS), 1053-1083 (GHQE…KLWQ), 1094-1124 (GHED…RIWN), 1135-1165 (GHAD…RLWD), 1176-1206 (GHTS…RLWD), 1217-1247 (GHQN…RVWS), 1258-1288 (GHDH…RLWT), 1299-1329 (GHQK…RQWD), 1340-1370 (GHSH…RLWT), 1381-1411 (DHQG…QLWN), 1422-1452 (GHQD…RVWN), 1463-1493 (HYEK…GIWE), 1504-1534 (GHEG…RIWD), 1545-1575 (GHQS…RLWD), 1586-1616 (GHQG…RLWD), and 1627-1657 (GHGN…KLWP).

This is an uncharacterized protein from Synechocystis sp. (strain ATCC 27184 / PCC 6803 / Kazusa).